The primary structure comprises 130 residues: Iron-sulfur cluster insertion protein ErpA (130 aa).

3 residues coordinate iron-sulfur cluster: C46, C116, and C118.

The protein belongs to the HesB/IscA family. As to quaternary structure, homodimer. Requires iron-sulfur cluster as cofactor.

Required for insertion of 4Fe-4S clusters for at least IspG. The chain is Iron-sulfur cluster insertion protein ErpA from Legionella pneumophila (strain Lens).